The following is a 630-amino-acid chain: Elongation factor 4 (630 aa).

Residues methionine 1–alanine 22 form a disordered region. Positions alanine 30–valine 211 constitute a tr-type G domain. GTP-binding positions include aspartate 42–threonine 47 and asparagine 158–aspartate 161.

The protein belongs to the TRAFAC class translation factor GTPase superfamily. Classic translation factor GTPase family. LepA subfamily.

The protein localises to the cell membrane. The catalysed reaction is GTP + H2O = GDP + phosphate + H(+). Required for accurate and efficient protein synthesis under certain stress conditions. May act as a fidelity factor of the translation reaction, by catalyzing a one-codon backward translocation of tRNAs on improperly translocated ribosomes. Back-translocation proceeds from a post-translocation (POST) complex to a pre-translocation (PRE) complex, thus giving elongation factor G a second chance to translocate the tRNAs correctly. Binds to ribosomes in a GTP-dependent manner. The sequence is that of Elongation factor 4 from Rhodococcus opacus (strain B4).